The primary structure comprises 115 residues: MSDQKPNTPNVPAPPDDGQGAVIAEKQLQRVEPPRVYQVVMLNDDFTPMEFVVMVLQQFFRHDLEAATQIMLKIHHEGRAVCGVYTQDVAATKVEMVQAAARRAGHPLQCTMEVA.

Belongs to the ClpS family. As to quaternary structure, binds to the N-terminal domain of the chaperone ClpA.

Its function is as follows. Involved in the modulation of the specificity of the ClpAP-mediated ATP-dependent protein degradation. The sequence is that of ATP-dependent Clp protease adapter protein ClpS from Leptothrix cholodnii (strain ATCC 51168 / LMG 8142 / SP-6) (Leptothrix discophora (strain SP-6)).